A 150-amino-acid chain; its full sequence is MVLCFPLLLLLLVLWGQVCPLHAIPKHLTKARWFEIQHIRPSPLQCNRAMNGINNYTQHCKPQNTFLHDSFQNVAAVCDLLSITCKNGYHNCHQSLKPVNMTDCRLTSGSYPQCRYSTAAQYKLFIIACEPPQKSDPPYNLVPVHLDSIL.

A signal peptide spans M1–A23. H38 (proton acceptor) is an active-site residue. Cystine bridges form between C46/C104, C60/C114, C78/C129, and C85/C92. N55 carries an N-linked (GlcNAc...) asparagine glycan. Substrate contacts are provided by residues K61–T65 and K86. A glycan (N-linked (GlcNAc...) asparagine) is linked at N100. R105 contributes to the substrate binding site. The active-site Proton donor is the H145.

It belongs to the pancreatic ribonuclease family. Interacts (via N-terminus) with bacterial lipopolysaccharide (LPS).

The protein resides in the secreted. It localises to the lysosome. It is found in the cytoplasmic granule. Functionally, ribonuclease which shows a preference for the pyrimidines uridine and cytosine. Has potent antibacterial activity against a range of Gram-positive and Gram-negative bacteria, including P.aeruginosa, A.baumanii, M.luteus, S.aureus, E.faecalis, E.faecium, S.saprophyticus and E.coli. Causes loss of bacterial membrane integrity, and also promotes agglutination of Gram-negative bacteria. Probably contributes to urinary tract sterility. Bactericidal activity is independent of RNase activity. In Saimiri sciureus (Common squirrel monkey), this protein is Ribonuclease K6 (RNASE6).